The following is a 72-amino-acid chain: Translation initiation factor IF-1 (72 aa).

The 72-residue stretch at 1–72 folds into the S1-like domain; that stretch reads MTKEENIEMQ…SKGRIIFRSR (72 aa).

The protein belongs to the IF-1 family. In terms of assembly, component of the 30S ribosomal translation pre-initiation complex which assembles on the 30S ribosome in the order IF-2 and IF-3, IF-1 and N-formylmethionyl-tRNA(fMet); mRNA recruitment can occur at any time during PIC assembly.

It localises to the cytoplasm. Functionally, one of the essential components for the initiation of protein synthesis. Stabilizes the binding of IF-2 and IF-3 on the 30S subunit to which N-formylmethionyl-tRNA(fMet) subsequently binds. Helps modulate mRNA selection, yielding the 30S pre-initiation complex (PIC). Upon addition of the 50S ribosomal subunit IF-1, IF-2 and IF-3 are released leaving the mature 70S translation initiation complex. In Wigglesworthia glossinidia brevipalpis, this protein is Translation initiation factor IF-1.